Consider the following 528-residue polypeptide: GMP synthase [glutamine-hydrolyzing] (528 aa).

Positions 13-204 constitute a Glutamine amidotransferase type-1 domain; the sequence is SILILDFGSQ…VYSISKCKAD (192 aa). The Nucleophile role is filled by C90. Residues H178 and E180 contribute to the active site. A GMPS ATP-PPase domain is found at 205-403; sequence WNTETFLEET…LGLPDEIIKR (199 aa). An ATP-binding site is contributed by 232 to 238; that stretch reads SGGVDSS.

As to quaternary structure, homodimer.

It carries out the reaction XMP + L-glutamine + ATP + H2O = GMP + L-glutamate + AMP + diphosphate + 2 H(+). It participates in purine metabolism; GMP biosynthesis; GMP from XMP (L-Gln route): step 1/1. In terms of biological role, catalyzes the synthesis of GMP from XMP. The protein is GMP synthase [glutamine-hydrolyzing] of Prochlorococcus marinus (strain MIT 9515).